Reading from the N-terminus, the 114-residue chain is Large ribosomal subunit protein uL18 (114 aa).

It belongs to the universal ribosomal protein uL18 family. Part of the 50S ribosomal subunit; part of the 5S rRNA/L5/L18/L25 subcomplex. Contacts the 5S and 23S rRNAs.

In terms of biological role, this is one of the proteins that bind and probably mediate the attachment of the 5S RNA into the large ribosomal subunit, where it forms part of the central protuberance. The chain is Large ribosomal subunit protein uL18 from Porphyromonas gingivalis (strain ATCC BAA-308 / W83).